Reading from the N-terminus, the 323-residue chain is Small ribosomal subunit protein uS3 (323 aa).

Positions 17–86 constitute a KH type-2 domain; it reads IDEFFADELG…DPQIDVQEVD (70 aa). The interval 251-303 is disordered; sequence ADPGVSSEDEEVVTEPVDIGGDDEDVEDIEVVSDDSGNDTETVAEEVEELDAE. The span at 270-303 shows a compositional bias: acidic residues; it reads GGDDEDVEDIEVVSDDSGNDTETVAEEVEELDAE.

This sequence belongs to the universal ribosomal protein uS3 family. In terms of assembly, part of the 30S ribosomal subunit.

Its function is as follows. Binds the lower part of the 30S subunit head. The sequence is that of Small ribosomal subunit protein uS3 from Haloquadratum walsbyi (strain DSM 16790 / HBSQ001).